The following is a 168-amino-acid chain: SsrA-binding protein (168 aa).

The tract at residues 1–20 (MAAQSKQAKPSGKQGGKKII) is disordered.

This sequence belongs to the SmpB family.

Its subcellular location is the cytoplasm. Functionally, required for rescue of stalled ribosomes mediated by trans-translation. Binds to transfer-messenger RNA (tmRNA), required for stable association of tmRNA with ribosomes. tmRNA and SmpB together mimic tRNA shape, replacing the anticodon stem-loop with SmpB. tmRNA is encoded by the ssrA gene; the 2 termini fold to resemble tRNA(Ala) and it encodes a 'tag peptide', a short internal open reading frame. During trans-translation Ala-aminoacylated tmRNA acts like a tRNA, entering the A-site of stalled ribosomes, displacing the stalled mRNA. The ribosome then switches to translate the ORF on the tmRNA; the nascent peptide is terminated with the 'tag peptide' encoded by the tmRNA and targeted for degradation. The ribosome is freed to recommence translation, which seems to be the essential function of trans-translation. In Mycobacterium ulcerans (strain Agy99), this protein is SsrA-binding protein.